We begin with the raw amino-acid sequence, 245 residues long: Dehydrogenase/reductase SDR family member 6 (245 aa).

NAD(+)-binding positions include 16 to 18, Asp37, and Asp58; that span reads QGI. Arg144 serves as a coordination point for substrate. Tyr147 functions as the Proton acceptor in the catalytic mechanism. Residues Lys151 and 180-184 contribute to the NAD(+) site; that span reads VDTPS. Positions 188 and 205 each coordinate substrate.

It belongs to the short-chain dehydrogenases/reductases (SDR) family. In terms of assembly, homotetramer.

The protein resides in the cytoplasm. The enzyme catalyses cis-4-hydroxy-L-proline + NAD(+) = 4-oxo-L-proline + NADH + H(+). It carries out the reaction (R)-3-hydroxybutanoate + NAD(+) = acetoacetate + NADH + H(+). The protein operates within amino-acid metabolism. Its pathway is siderophore biosynthesis. NAD(H)-dependent dehydrogenase/reductase with a preference for cyclic substrates. Catalyzes stereoselective conversion of 4-oxo-L-proline to cis-4-hydroxy-L-proline, likely a detoxification mechanism for ketoprolines. Mediates the formation of 2,5-dihydroxybenzoate (2,5-DHBA), a siderophore that chelates free cytoplasmic iron, thereby regulating iron transport and homeostasis while protecting cells against free radical-induced oxidative stress. The iron-siderophore complex is imported into mitochondria, providing an iron source for mitochondrial metabolic processes in particular heme synthesis. May act as a 3-hydroxybutyrate dehydrogenase. This Aquarana catesbeiana (American bullfrog) protein is Dehydrogenase/reductase SDR family member 6 (bdh2).